We begin with the raw amino-acid sequence, 428 residues long: Serine hydroxymethyltransferase (428 aa).

(6S)-5,6,7,8-tetrahydrofolate contacts are provided by residues Leu-117 and Gly-121–Leu-123. An N6-(pyridoxal phosphate)lysine modification is found at Lys-226.

It belongs to the SHMT family. As to quaternary structure, homodimer. The cofactor is pyridoxal 5'-phosphate.

It localises to the cytoplasm. It carries out the reaction (6R)-5,10-methylene-5,6,7,8-tetrahydrofolate + glycine + H2O = (6S)-5,6,7,8-tetrahydrofolate + L-serine. It functions in the pathway one-carbon metabolism; tetrahydrofolate interconversion. Its pathway is amino-acid biosynthesis; glycine biosynthesis; glycine from L-serine: step 1/1. Catalyzes the reversible interconversion of serine and glycine with tetrahydrofolate (THF) serving as the one-carbon carrier. This reaction serves as the major source of one-carbon groups required for the biosynthesis of purines, thymidylate, methionine, and other important biomolecules. Also exhibits THF-independent aldolase activity toward beta-hydroxyamino acids, producing glycine and aldehydes, via a retro-aldol mechanism. The polypeptide is Serine hydroxymethyltransferase (Aquifex aeolicus (strain VF5)).